The sequence spans 124 residues: Large ribosomal subunit protein bL12 (124 aa).

This sequence belongs to the bacterial ribosomal protein bL12 family. As to quaternary structure, homodimer. Part of the ribosomal stalk of the 50S ribosomal subunit. Forms a multimeric L10(L12)X complex, where L10 forms an elongated spine to which 2 to 4 L12 dimers bind in a sequential fashion. Binds GTP-bound translation factors.

Forms part of the ribosomal stalk which helps the ribosome interact with GTP-bound translation factors. Is thus essential for accurate translation. This Bacteroides thetaiotaomicron (strain ATCC 29148 / DSM 2079 / JCM 5827 / CCUG 10774 / NCTC 10582 / VPI-5482 / E50) protein is Large ribosomal subunit protein bL12.